The chain runs to 75 residues: Putative antitoxin VapB17 (75 aa).

Its function is as follows. Putative antitoxin component of a possible type II toxin-antitoxin (TA) system. The cognate toxin is VapC17. The sequence is that of Putative antitoxin VapB17 (vapB17) from Mycobacterium tuberculosis (strain CDC 1551 / Oshkosh).